Here is a 205-residue protein sequence, read N- to C-terminus: GTP cyclohydrolase-2 (205 aa).

49–53 (RVHSE) provides a ligand contact to GTP. 3 residues coordinate Zn(2+): C54, C65, and C67. GTP contacts are provided by residues Q70, 92 to 94 (EGR), and T114. D126 serves as the catalytic Proton acceptor. R128 functions as the Nucleophile in the catalytic mechanism. GTP contacts are provided by T149 and K154.

Belongs to the GTP cyclohydrolase II family. It depends on Zn(2+) as a cofactor.

The catalysed reaction is GTP + 4 H2O = 2,5-diamino-6-hydroxy-4-(5-phosphoribosylamino)-pyrimidine + formate + 2 phosphate + 3 H(+). The protein operates within cofactor biosynthesis; riboflavin biosynthesis; 5-amino-6-(D-ribitylamino)uracil from GTP: step 1/4. Its function is as follows. Catalyzes the conversion of GTP to 2,5-diamino-6-ribosylamino-4(3H)-pyrimidinone 5'-phosphate (DARP), formate and pyrophosphate. The protein is GTP cyclohydrolase-2 of Pseudomonas fluorescens (strain SBW25).